The sequence spans 556 residues: CDP-diacylglycerol--glycerol-3-phosphate 3-phosphatidyltransferase, mitochondrial (556 aa).

Residues 1 to 28 (MAVAAAAAAGPVFWRRLLGLLPGRPGLA) constitute a mitochondrion transit peptide. Ser49 carries the post-translational modification Phosphoserine. ATP is bound at residue 124 to 131 (ASLYLGTG). 2 consecutive PLD phosphodiesterase domains span residues 215–241 (TIGL…SDSY) and 460–493 (RGWT…GYRS). Catalysis depends on residues His220, Lys222, and Asp227.

Belongs to the CDP-alcohol phosphatidyltransferase class-II family.

Its subcellular location is the mitochondrion. The catalysed reaction is a CDP-1,2-diacyl-sn-glycerol + sn-glycerol 3-phosphate = a 1,2-diacyl-sn-glycero-3-phospho-(1'-sn-glycero-3'-phosphate) + CMP + H(+). Its pathway is phospholipid metabolism; phosphatidylglycerol biosynthesis; phosphatidylglycerol from CDP-diacylglycerol: step 1/2. Activated by calcium and magnesium and inhibited by other bivalent cations. Its function is as follows. Functions in the biosynthesis of the anionic phospholipids phosphatidylglycerol and cardiolipin. This is CDP-diacylglycerol--glycerol-3-phosphate 3-phosphatidyltransferase, mitochondrial (PGS1) from Homo sapiens (Human).